Consider the following 510-residue polypeptide: ATP synthase subunit alpha (510 aa).

169–176 (GDRQTGKT) is a binding site for ATP.

This sequence belongs to the ATPase alpha/beta chains family. As to quaternary structure, F-type ATPases have 2 components, CF(1) - the catalytic core - and CF(0) - the membrane proton channel. CF(1) has five subunits: alpha(3), beta(3), gamma(1), delta(1), epsilon(1). CF(0) has three main subunits: a(1), b(2) and c(9-12). The alpha and beta chains form an alternating ring which encloses part of the gamma chain. CF(1) is attached to CF(0) by a central stalk formed by the gamma and epsilon chains, while a peripheral stalk is formed by the delta and b chains.

It localises to the cell inner membrane. The catalysed reaction is ATP + H2O + 4 H(+)(in) = ADP + phosphate + 5 H(+)(out). Produces ATP from ADP in the presence of a proton gradient across the membrane. The alpha chain is a regulatory subunit. The chain is ATP synthase subunit alpha from Rickettsia peacockii (strain Rustic).